We begin with the raw amino-acid sequence, 188 residues long: GTP cyclohydrolase 1 (188 aa).

The Zn(2+) site is built by C76, H79, and C148.

It belongs to the GTP cyclohydrolase I family. Homomer.

The enzyme catalyses GTP + H2O = 7,8-dihydroneopterin 3'-triphosphate + formate + H(+). Its pathway is cofactor biosynthesis; 7,8-dihydroneopterin triphosphate biosynthesis; 7,8-dihydroneopterin triphosphate from GTP: step 1/1. This chain is GTP cyclohydrolase 1, found in Thermoanaerobacter pseudethanolicus (strain ATCC 33223 / 39E) (Clostridium thermohydrosulfuricum).